The primary structure comprises 143 residues: 6,7-dimethyl-8-ribityllumazine synthase (143 aa).

Residues tryptophan 10, 44–46 (SFE), and 68–70 (CVI) contribute to the 5-amino-6-(D-ribitylamino)uracil site. Residue 73-74 (DT) coordinates (2S)-2-hydroxy-3-oxobutyl phosphate. Histidine 76 serves as the catalytic Proton donor. Tyrosine 101 lines the 5-amino-6-(D-ribitylamino)uracil pocket. A (2S)-2-hydroxy-3-oxobutyl phosphate-binding site is contributed by arginine 115.

The protein belongs to the DMRL synthase family.

The enzyme catalyses (2S)-2-hydroxy-3-oxobutyl phosphate + 5-amino-6-(D-ribitylamino)uracil = 6,7-dimethyl-8-(1-D-ribityl)lumazine + phosphate + 2 H2O + H(+). It functions in the pathway cofactor biosynthesis; riboflavin biosynthesis; riboflavin from 2-hydroxy-3-oxobutyl phosphate and 5-amino-6-(D-ribitylamino)uracil: step 1/2. Catalyzes the formation of 6,7-dimethyl-8-ribityllumazine by condensation of 5-amino-6-(D-ribitylamino)uracil with 3,4-dihydroxy-2-butanone 4-phosphate. This is the penultimate step in the biosynthesis of riboflavin. The protein is 6,7-dimethyl-8-ribityllumazine synthase of Bacteroides fragilis (strain YCH46).